The chain runs to 179 residues: Small ribosomal subunit protein uS5c (179 aa).

The S5 DRBM domain maps to 26 to 89; the sequence is FVERLIKISR…TDGRKNLIDV (64 aa).

The protein belongs to the universal ribosomal protein uS5 family. As to quaternary structure, part of the 30S ribosomal subunit. Contacts protein S4.

Its subcellular location is the plastid. The protein resides in the chloroplast. With S4 and S12 plays an important role in translational accuracy. The polypeptide is Small ribosomal subunit protein uS5c (rps5) (Thalassiosira pseudonana (Marine diatom)).